We begin with the raw amino-acid sequence, 122 residues long: uncharacterized protein (122 aa).

To B.subtilis YpdA.

This is an uncharacterized protein from Bacillus licheniformis.